A 29-amino-acid polypeptide reads, in one-letter code: Cyclotide mden-F (29 aa).

The cyclopeptide (Gly-Asn) cross-link spans 1 to 29; that stretch reads GLPICGETCFFGKCNTPKCTCINPICYKN. Intrachain disulfides connect cysteine 5–cysteine 19, cysteine 9–cysteine 21, and cysteine 14–cysteine 26.

The protein belongs to the cyclotide family. In terms of processing, this is a cyclic peptide.

Probably participates in a plant defense mechanism. The sequence is that of Cyclotide mden-F from Melicytus dentatus (Tree violet).